The following is a 222-amino-acid chain: Probable GTP-binding protein EngB (222 aa).

The 176-residue stretch at 22–197 folds into the EngB-type G domain; that stretch reads TSAEIAFVGR…ETVVAGWFAG (176 aa). Residues Ser-37 and Thr-59 each coordinate Mg(2+). The tract at residues 201-222 is disordered; it reads RQADELTDGEPDDRTPDPDSAS. The segment covering 212–222 has biased composition (basic and acidic residues); sequence DDRTPDPDSAS.

It belongs to the TRAFAC class TrmE-Era-EngA-EngB-Septin-like GTPase superfamily. EngB GTPase family. The cofactor is Mg(2+).

Its function is as follows. Necessary for normal cell division and for the maintenance of normal septation. The chain is Probable GTP-binding protein EngB from Laribacter hongkongensis (strain HLHK9).